Here is a 1061-residue protein sequence, read N- to C-terminus: E3 SUMO-protein ligase ZNF451 (1061 aa).

The segment at 1-38 (MGDPGSEIIESVPPAGPEASESTTDENEDDIQFVSEGP) is disordered. A sufficient for E3 SUMO-protein ligase activity region spans residues 1–246 (MGDPGSEIIE…TDDGHNNNLL (246 aa)). An important for interaction with SUMO1 and SUMO2 region spans residues 1–344 (MGDPGSEIIE…RVHCRNAGPV (344 aa)). Residues 30-37 (DIQFVSEG) are interaction with SUMO2 1. The PLRP signature appears at 38-41 (PLRP). Positions 42–50 (VLEYIDLVS) are interaction with SUMO2 2. Residues Lys75, Lys77, Lys106, Ile121, Ala130, Leu138, Lys139, Lys144, and Lys153 each participate in a glycyl lysine isopeptide (Lys-Gly) (interchain with G-Cter in SUMO2) cross-link. At Ser155 the chain carries Phosphoserine. Omega-N-methylarginine is present on Arg158. Glycyl lysine isopeptide (Lys-Gly) (interchain with G-Cter in SUMO2) cross-links involve residues Val164 and Lys167. The interval 168-525 (PILCPIMHCN…HMSRIHGGAH (358 aa)) is important for interaction with SMAD4. The segment at 169–195 (ILCPIMHCNKEFDNGHLLLGHLKRFDH) adopts a C2H2-type 1 zinc-finger fold. Residues Gln226, Gly240, Pro247, Ser263, Lys270, Lys275, Lys283, Asp286, Lys288, Pro293, Lys301, and Lys309 each participate in a glycyl lysine isopeptide (Lys-Gly) (interchain with G-Cter in SUMO2) cross-link. A C2H2-type 2 zinc finger spans residues 253–277 (FACPNCFLLFSRKEECSKHMSGKNH). The segment at 315–337 (VKCVACHKTLRSHMELTAHFRVH) adopts a C2H2-type 3 zinc-finger fold. Lys357 is covalently cross-linked (Glycyl lysine isopeptide (Lys-Gly) (interchain with G-Cter in SUMO2)). The C2H2-type 4 zinc-finger motif lies at 362–386 (GYCPDCNQVFVDETSTQNHKQNSGH). Lys423 is covalently cross-linked (Glycyl lysine isopeptide (Lys-Gly) (interchain with G-Cter in SUMO2)). Ser432 carries the phosphoserine modification. Residues Lys434, Lys446, Lys452, Lys454, Lys464, Phe473, Val490, Cys500, Lys505, Asp508, Gly522, Trp532, Lys543, and Lys585 each participate in a glycyl lysine isopeptide (Lys-Gly) (interchain with G-Cter in SUMO2) cross-link. A C2H2-type 5 zinc finger spans residues 498-521 (YKCVVCGKVCDDSGVIRLHMSRIH). The C2H2-type 6 zinc finger occupies 531–554 (FWCRTCKKELTRKDTIMAHVTEFH). The C2H2-type 7; atypical zinc finger occupies 606-631 (WQCRICEDMFDSQEYVKQHCMSLASH). Glycyl lysine isopeptide (Lys-Gly) (interchain with G-Cter in SUMO2) cross-links involve residues Lys632, Lys647, and Lys664. The C2H2-type 8 zinc-finger motif lies at 636 to 659 (YSCAHCRKPFHKIETLYRHCQDEH). The C2H2-type 9 zinc-finger motif lies at 667-690 (YFCGLCDLIFNVEEAFLSHYEEHH). A Glycyl lysine isopeptide (Lys-Gly) (interchain with G-Cter in SUMO1); alternate cross-link involves residue Lys706. Lys706 is covalently cross-linked (Glycyl lysine isopeptide (Lys-Gly) (interchain with G-Cter in SUMO2); alternate). Glycyl lysine isopeptide (Lys-Gly) (interchain with G-Cter in SUMO2) cross-links involve residues Lys731 and Lys748. Residues 753-776 (FRCSLCSATAQNLTDMNTHIHQVH) form a C2H2-type 10 zinc finger. Residues Lys777, Lys779, Lys790, Lys817, Lys827, Lys832, Lys843, Lys845, Lys852, Lys951, Lys992, and Lys993 each participate in a glycyl lysine isopeptide (Lys-Gly) (interchain with G-Cter in SUMO2) cross-link. Residues 789–812 (IKCGTCTKAFHDPESAQQHFHRKH) form a C2H2-type 11 zinc finger. The important for ubiquitin binding stretch occupies residues 1050-1061 (LEEAIRRSLEEM).

It belongs to the krueppel C2H2-type zinc-finger protein family. In terms of assembly, homooligomer. Interacts (via N-terminal region) with SUMO1. Interacts (via N-terminal region) with SUMO2. Interacts simultaneously with two SUMO2 chains. Identified in a complex with SUMO2 and UBE2I/UBC9, where one ZNF451 interacts with one UBE2I/UBC9 and two SUMO2 chains, one bound to the UBE2I/UBC9 active site and the other to another region of the same UBE2I/UBC9 molecule. Interacts (via C-terminus) with ubiquitin. Interacts (via N-terminal zinc-finger domains) with SMAD4 (via MH2 domain). Interacts with SMAD2 and SMAD3. Identified in a complex that contains at least ZNF451, SMAD2, SMAD3 and SMAD4. Interacts with EP300. Inhibits interaction between EP300 and the SMAD4 complex. Interacts with SIMC1. In terms of processing, sumoylated. Predominantly sumoylated on the N-terminal region that is important for interaction with SUMO1 and SUMO2. Sumoylation is important for localization in nuclear granules; desumoylation leads to diffuse nucleoplasmic location. Autosumoylated (in vitro). Sumoylation enhances E3 SUMO-protein ligase activity.

It is found in the nucleus. It localises to the PML body. The protein localises to the nucleoplasm. Its pathway is protein modification; protein sumoylation. Its function is as follows. E3 SUMO-protein ligase; has a preference for SUMO2 and SUMO3 and facilitates UBE2I/UBC9-mediated sumoylation of target proteins. Plays a role in protein SUMO2 modification in response to stress caused by DNA damage and by proteasome inhibitors (in vitro). Required for MCM4 sumoylation. Has no activity with SUMO1. Preferentially transfers an additional SUMO2 chain onto the SUMO2 consensus site 'Lys-11'. Negatively regulates transcriptional activation mediated by the SMAD4 complex in response to TGF-beta signaling. Inhibits EP300-mediated acetylation of histone H3 at 'Lys-9'. Plays a role in regulating the transcription of AR targets. The chain is E3 SUMO-protein ligase ZNF451 (ZNF451) from Homo sapiens (Human).